Here is a 297-residue protein sequence, read N- to C-terminus: Carbamate kinase (297 aa).

Belongs to the carbamate kinase family.

It localises to the cytoplasm. It catalyses the reaction hydrogencarbonate + NH4(+) + ATP = carbamoyl phosphate + ADP + H2O + H(+). It carries out the reaction carbamate + ATP = carbamoyl phosphate + ADP. The catalysed reaction is hydrogencarbonate + NH4(+) = carbamate + H2O + H(+). The protein operates within nitrogen metabolism; (S)-allantoin degradation. Functionally, kinase involved in the anaerobic nitrogen utilization via the assimilation of allantoin. Catalyzes the transfer of a phosphate group from carbamoyl phosphate to ADP to produce ATP and leave carbamate, which spontaneously hydrolyzes to ammonia and hydrogencarbonate. This Escherichia coli (strain K12) protein is Carbamate kinase.